A 629-amino-acid polypeptide reads, in one-letter code: Dehydrogenase pyvF (629 aa).

Residues 1 to 22 (MAGSPFTTALLSAWTLSTVAVG) form the signal peptide. Residues 61–62 (AS) and 82–83 (EA) each bind FAD. N-linked (GlcNAc...) asparagine glycosylation occurs at N92. 144 to 147 (NLMA) contributes to the FAD binding site. 6 N-linked (GlcNAc...) asparagine glycosylation sites follow: N172, N182, N256, N284, N312, and N421. The active-site Proton acceptor is the H552. FAD-binding positions include A586 and 597–598 (PL).

It belongs to the GMC oxidoreductase family. As to quaternary structure, homodimer. FAD is required as a cofactor.

Its pathway is secondary metabolite biosynthesis. Its function is as follows. Dehydrogenase; part of the gene cluster that mediates the biosynthesis of pyranoviolin A, a pyranonigrin analog with a C-3 methoxy group. Initially, the PKS portion of pyvA synthesizes C-10 carbon chain from 5 molecules of malonyl-CoA, which is then condensed with the thiolation (T) domain-bound glycine activated by the adenylation (A) domain. The subsequent chain release by Dieckmann condensation (DKC) could be catalyzed by the TE domain present at the C-terminus of pyvA and/or the alpha/beta hydrolase pyvD, installing the tetramic acid moiety. The FAD-dependent monooxygenase pyvC next epoxidizes one of the olefins of the polyketide part, and the epoxide ring-opening induces the dihydro-gamma-pyrone ring formation. The cytochrome P450 monooxygeanse pyvB would be responsible for the 2 consecutive reactions, in which the dihydro-gamma-pyrone is oxidized to gamma-pyrone and C-7 is hydroxylated to yield pyranonigrin F. Finally, the O-methyltransferase pyvH methylates the C-3 hydroxy group to complete the biosynthesis. This Aspergillus violaceofuscus (strain CBS 115571) protein is Dehydrogenase pyvF.